A 114-amino-acid polypeptide reads, in one-letter code: T cell receptor beta variable 3-1 (114 aa).

A signal peptide spans 1–21 (MGCRLLCCVVFCLLQAGPLDT). In terms of domain architecture, Ig-like spans 22 to 114 (AVSQTPKYLV…SAVYFCASSQ (93 aa)). Cysteine 42 and cysteine 110 are joined by a disulfide. An N-linked (GlcNAc...) asparagine glycan is attached at asparagine 76.

In terms of assembly, alpha-beta TR is a heterodimer composed of an alpha and beta chain; disulfide-linked. The alpha-beta TR is associated with the transmembrane signaling CD3 coreceptor proteins to form the TR-CD3 (TcR or TCR). The assembly of alpha-beta TR heterodimers with CD3 occurs in the endoplasmic reticulum where a single alpha-beta TR heterodimer associates with one CD3D-CD3E heterodimer, one CD3G-CD3E heterodimer and one CD247 homodimer forming a stable octameric structure. CD3D-CD3E and CD3G-CD3E heterodimers preferentially associate with TR alpha and TR beta chains, respectively. The association of the CD247 homodimer is the last step of TcR assembly in the endoplasmic reticulum and is required for transport to the cell surface.

The protein localises to the cell membrane. Its function is as follows. V region of the variable domain of T cell receptor (TR) beta chain that participates in the antigen recognition. Alpha-beta T cell receptors are antigen specific receptors which are essential to the immune response and are present on the cell surface of T lymphocytes. Recognize peptide-major histocompatibility (MH) (pMH) complexes that are displayed by antigen presenting cells (APC), a prerequisite for efficient T cell adaptive immunity against pathogens. Binding of alpha-beta TR to pMH complex initiates TR-CD3 clustering on the cell surface and intracellular activation of LCK that phosphorylates the ITAM motifs of CD3G, CD3D, CD3E and CD247 enabling the recruitment of ZAP70. In turn ZAP70 phosphorylates LAT, which recruits numerous signaling molecules to form the LAT signalosome. The LAT signalosome propagates signal branching to three major signaling pathways, the calcium, the mitogen-activated protein kinase (MAPK) kinase and the nuclear factor NF-kappa-B (NF-kB) pathways, leading to the mobilization of transcription factors that are critical for gene expression and essential for T cell growth and differentiation. The T cell repertoire is generated in the thymus, by V-(D)-J rearrangement. This repertoire is then shaped by intrathymic selection events to generate a peripheral T cell pool of self-MH restricted, non-autoaggressive T cells. Post-thymic interaction of alpha-beta TR with the pMH complexes shapes TR structural and functional avidity. This chain is T cell receptor beta variable 3-1, found in Homo sapiens (Human).